We begin with the raw amino-acid sequence, 498 residues long: Glycerol kinase (498 aa).

Residue Thr-12 coordinates ADP. ATP contacts are provided by Thr-12, Thr-13, and Ser-14. Thr-12 is a binding site for sn-glycerol 3-phosphate. Residue Arg-16 participates in ADP binding. Arg-82, Glu-83, Tyr-134, and Asp-243 together coordinate sn-glycerol 3-phosphate. Glycerol-binding residues include Arg-82, Glu-83, Tyr-134, Asp-243, and Gln-244. Residues Thr-265 and Gly-308 each contribute to the ADP site. Thr-265, Gly-308, Gln-312, and Gly-412 together coordinate ATP. Gly-412 contacts ADP.

It belongs to the FGGY kinase family.

It catalyses the reaction glycerol + ATP = sn-glycerol 3-phosphate + ADP + H(+). Its pathway is polyol metabolism; glycerol degradation via glycerol kinase pathway; sn-glycerol 3-phosphate from glycerol: step 1/1. Inhibited by fructose 1,6-bisphosphate (FBP). In terms of biological role, key enzyme in the regulation of glycerol uptake and metabolism. Catalyzes the phosphorylation of glycerol to yield sn-glycerol 3-phosphate. The chain is Glycerol kinase from Rhizobium rhizogenes (strain K84 / ATCC BAA-868) (Agrobacterium radiobacter).